The chain runs to 114 residues: Large ribosomal subunit protein bL19 (114 aa).

Belongs to the bacterial ribosomal protein bL19 family.

Its function is as follows. This protein is located at the 30S-50S ribosomal subunit interface and may play a role in the structure and function of the aminoacyl-tRNA binding site. The polypeptide is Large ribosomal subunit protein bL19 (Acidithiobacillus ferrooxidans (strain ATCC 23270 / DSM 14882 / CIP 104768 / NCIMB 8455) (Ferrobacillus ferrooxidans (strain ATCC 23270))).